Reading from the N-terminus, the 122-residue chain is Large ribosomal subunit protein uL14 (122 aa).

Belongs to the universal ribosomal protein uL14 family. Part of the 50S ribosomal subunit. Forms a cluster with proteins L3 and L19. In the 70S ribosome, L14 and L19 interact and together make contacts with the 16S rRNA in bridges B5 and B8.

Functionally, binds to 23S rRNA. Forms part of two intersubunit bridges in the 70S ribosome. This Sinorhizobium fredii (strain NBRC 101917 / NGR234) protein is Large ribosomal subunit protein uL14.